A 393-amino-acid polypeptide reads, in one-letter code: MIAPTTRKDLMIINMGPHHPSMHGVLRLIITLDGEDVIDCEPILGYLHRGMEKIAENRTILQYLPYVTRWDYLATMFTEAISVNGPEQLGNIQVPKRASYIRTIMLELSRIASHLLWLGPFMADIGAQTPFFYIFREREFIYDLFEAATGMRMMHNFFRIGGIAADLPHGWIDKCLDFCDYFLRGVVEYQKLITRNPIFLERVEGVGIIGAEEALNWGLSGPMLRASGIQWDLRKMDHYECYDEFDWEVQWQKEGDSLARYLVRISEMTESIKIIQQALERIPGGPFENLEIRRFDRIKDTEWNDFEYRFISKKPSPTFELSKQELYVRVEAPKGELGIFLIGDQSVFPWRWKIRPPGFINLQILSQLVKRMKLADIMTILGSIDIIMGEVDR.

It belongs to the complex I 49 kDa subunit family. As to quaternary structure, NDH is composed of at least 16 different subunits, 5 of which are encoded in the nucleus.

The protein resides in the plastid. The protein localises to the chloroplast thylakoid membrane. It carries out the reaction a plastoquinone + NADH + (n+1) H(+)(in) = a plastoquinol + NAD(+) + n H(+)(out). The catalysed reaction is a plastoquinone + NADPH + (n+1) H(+)(in) = a plastoquinol + NADP(+) + n H(+)(out). NDH shuttles electrons from NAD(P)H:plastoquinone, via FMN and iron-sulfur (Fe-S) centers, to quinones in the photosynthetic chain and possibly in a chloroplast respiratory chain. The immediate electron acceptor for the enzyme in this species is believed to be plastoquinone. Couples the redox reaction to proton translocation, and thus conserves the redox energy in a proton gradient. This chain is NAD(P)H-quinone oxidoreductase subunit H, chloroplastic, found in Jasminum nudiflorum (Winter jasmine).